A 236-amino-acid chain; its full sequence is Lipoarabinomannan carrier protein LprG (236 aa).

Positions 1–26 (MRTPRRHCRRIAVLAAVSIAATVVAG) are cleaved as a signal peptide. Residue C27 is the site of N-palmitoyl cysteine attachment. The S-diacylglycerol cysteine moiety is linked to residue C27.

Belongs to the LppX/LprAFG lipoprotein family. In terms of processing, modified by Lgt on Cys-27 with an S-linked diacylglyceral, signal peptide is removed by LspA, Cys-27 is further modifed with a fatty acid on its amino group by Lnt yielding a triacylated protein.

It is found in the cell inner membrane. It localises to the secreted. The protein resides in the cell wall. Functionally, helps membrane protein Mb1445c (P55) transport triacylglycerides (TAG) across the inner cell membrane into the periplasm and probably ultimately to the outer membrane. Binds TAG in its hydrophobic cavity and transfers it between lipid bilayers. TAG probably regulates lipid metabolism and growth regulation and plays a structural role in the outer membrane. Binds di- and triacylated phosphatidyl-myo-inositol mannosides (PIMs), and glycolipid lipoglycan modulins lipoarabinomannan (LAM) and lipomannan (LM), facilitating their recognition by TLR2. Required for activity of drug efflux transporter Mb1445c. Required, probably with Mb1445c, for normal surface localization of LAM. Constitutes a host TLR2 agonist (toll-like receptor). The protein is Lipoarabinomannan carrier protein LprG of Mycobacterium bovis (strain ATCC BAA-935 / AF2122/97).